A 635-amino-acid polypeptide reads, in one-letter code: MKNNYSEANIKILKGLDAVKKRPGMYIGSTDSRGFHHLLWEILDNCVDEVLSGFANTIAVVLHAENQITVSDNGRGIPFETHSDSKISTIDTVFTYLHAGGKFDNDSYKIAGGLHGVGASVVNALSDQLQVTVKRQGKVYRSVYENGGKIKQKAHCIGNAKIDEHGTSVTFRPDPKVFKKIHFDSELIRARLKELAFLFKKLQLTFVDETGSGEKEVFFTEAGISQYLDELNADSKQIAQKIFVSGTEDDIELEAVFQFIDGEDEKLLSFANSIRTSEGGSHEASFRQSVGDVINNYCRKYNFLKERDKNFEASEIREGLNGIIKVNLPEKIIAFEGQTKSKLFSKEVKAVVQKLTQKHFFQFLERNSVDAKLIVEKLFYNRKLRQELKQQRQIKKNLSNPKAERILFGKLAPAQSKKVAERELFVVEGDSAGGTAKMGRDRFLQAILPLRGKVLNVEKINNKKEAINNEELLTLIFCIGTGIGNNFTIRDRKYDKIIIMTDADNDGAHIQILLLTFFYRYMKPLIEKGHIYLALPPLYKFEGRDKKARYLWTEQELEQYRAKHSHFNVQRYKGLGEMNADQLWETTMNPMTRKLIQVKLDNFIQAEKQINVFMGDKTELRKSWIEANINFSSEN.

ATP is bound by residues Tyr5, Asn45, Asp72, 113-119 (GLHGVGA), and Lys340. Positions 422-537 (RELFVVEGDS…KGHIYLALPP (116 aa)) constitute a Toprim domain. Positions 428, 502, and 504 each coordinate Mg(2+).

This sequence belongs to the type II topoisomerase family. ParE type 2 subfamily. As to quaternary structure, heterotetramer composed of ParC and ParE. It depends on Mg(2+) as a cofactor. The cofactor is Mn(2+). Ca(2+) is required as a cofactor.

The enzyme catalyses ATP-dependent breakage, passage and rejoining of double-stranded DNA.. Topoisomerase IV is essential for chromosome segregation. It relaxes supercoiled DNA. Performs the decatenation events required during the replication of a circular DNA molecule. This chain is DNA topoisomerase 4 subunit B, found in Mycoplasma pneumoniae (strain ATCC 29342 / M129 / Subtype 1) (Mycoplasmoides pneumoniae).